The sequence spans 181 residues: Isopentenyl-diphosphate Delta-isomerase (181 aa).

Residues H29 and H36 each contribute to the Mn(2+) site. Positions P34–E167 constitute a Nudix hydrolase domain. The active site involves C71. H73 is a Mn(2+) binding site. E91 is a binding site for Mg(2+). 2 residues coordinate Mn(2+): E118 and E120. The active site involves E120.

The protein belongs to the IPP isomerase type 1 family. Requires Mg(2+) as cofactor. It depends on Mn(2+) as a cofactor.

It is found in the cytoplasm. The catalysed reaction is isopentenyl diphosphate = dimethylallyl diphosphate. The protein operates within isoprenoid biosynthesis; dimethylallyl diphosphate biosynthesis; dimethylallyl diphosphate from isopentenyl diphosphate: step 1/1. In terms of biological role, catalyzes the 1,3-allylic rearrangement of the homoallylic substrate isopentenyl (IPP) to its highly electrophilic allylic isomer, dimethylallyl diphosphate (DMAPP). This chain is Isopentenyl-diphosphate Delta-isomerase, found in Mycolicibacterium vanbaalenii (strain DSM 7251 / JCM 13017 / BCRC 16820 / KCTC 9966 / NRRL B-24157 / PYR-1) (Mycobacterium vanbaalenii).